Consider the following 368-residue polypeptide: ATP-dependent (S)-NAD(P)H-hydrate dehydratase (368 aa).

The 345-residue stretch at 13–357 (LFKKVRKIVP…DEVHESFLEL (345 aa)) folds into the YjeF C-terminal domain. Residues Gly-125 and 178-184 (NVNEFSR) each bind (6S)-NADPHX. ATP is bound by residues 231–235 (KGPHD) and 250–259 (GGLKRSGGQG). Asp-260 is a binding site for (6S)-NADPHX.

Belongs to the NnrD/CARKD family. Mg(2+) serves as cofactor.

It localises to the cytoplasm. The catalysed reaction is (6S)-NADHX + ATP = ADP + phosphate + NADH + H(+). It catalyses the reaction (6S)-NADPHX + ATP = ADP + phosphate + NADPH + H(+). Catalyzes the dehydration of the S-form of NAD(P)HX at the expense of ATP, which is converted to ADP. Together with NAD(P)HX epimerase, which catalyzes the epimerization of the S- and R-forms, the enzyme allows the repair of both epimers of NAD(P)HX, a damaged form of NAD(P)H that is a result of enzymatic or heat-dependent hydration. In Aspergillus fumigatus (strain ATCC MYA-4609 / CBS 101355 / FGSC A1100 / Af293) (Neosartorya fumigata), this protein is ATP-dependent (S)-NAD(P)H-hydrate dehydratase.